The primary structure comprises 476 residues: Adenosylhomocysteinase (476 aa).

Substrate-binding residues include threonine 67, aspartate 142, and glutamate 202. Residue threonine 203–threonine 205 participates in NAD(+) binding. Substrate is bound by residues lysine 232 and aspartate 236. NAD(+)-binding positions include asparagine 237, glycine 266–glycine 271, glutamate 289, asparagine 324, isoleucine 345–histidine 347, and asparagine 390.

Belongs to the adenosylhomocysteinase family. The cofactor is NAD(+).

Its subcellular location is the cytoplasm. The enzyme catalyses S-adenosyl-L-homocysteine + H2O = L-homocysteine + adenosine. Its pathway is amino-acid biosynthesis; L-homocysteine biosynthesis; L-homocysteine from S-adenosyl-L-homocysteine: step 1/1. In terms of biological role, may play a key role in the regulation of the intracellular concentration of adenosylhomocysteine. This Synechococcus sp. (strain CC9605) protein is Adenosylhomocysteinase.